The following is a 366-amino-acid chain: RNA 3'-terminal phosphate cyclase (366 aa).

6 residues coordinate ATP: Gln-104, Pro-131, Tyr-294, Asp-297, Gln-298, and His-320. Residue His-320 is the Tele-AMP-histidine intermediate of the active site.

The protein belongs to the RNA 3'-terminal cyclase family. Type 1 subfamily.

The protein resides in the nucleus. It localises to the nucleoplasm. It carries out the reaction a 3'-end 3'-phospho-ribonucleotide-RNA + ATP = a 3'-end 2',3'-cyclophospho-ribonucleotide-RNA + AMP + diphosphate. Catalyzes the conversion of 3'-phosphate to a 2',3'-cyclic phosphodiester at the end of RNA. The mechanism of action of the enzyme occurs in 3 steps: (A) adenylation of the enzyme by ATP; (B) transfer of adenylate to an RNA-N3'P to produce RNA-N3'PP5'A; (C) and attack of the adjacent 2'-hydroxyl on the 3'-phosphorus in the diester linkage to produce the cyclic end product. Likely functions in some aspects of cellular RNA processing. Function plays an important role in regulating axon regeneration by inhibiting central nervous system (CNS) axon regeneration following optic nerve injury. The polypeptide is RNA 3'-terminal phosphate cyclase (RTCA) (Bos taurus (Bovine)).